The following is a 115-amino-acid chain: Large ribosomal subunit protein bL19 (115 aa).

This sequence belongs to the bacterial ribosomal protein bL19 family.

This protein is located at the 30S-50S ribosomal subunit interface and may play a role in the structure and function of the aminoacyl-tRNA binding site. This chain is Large ribosomal subunit protein bL19, found in Coxiella burnetii (strain CbuK_Q154) (Coxiella burnetii (strain Q154)).